The chain runs to 296 residues: Ribosomal protein L11 methyltransferase (296 aa).

S-adenosyl-L-methionine-binding residues include Thr-145, Gly-166, Asp-188, and Asn-230.

This sequence belongs to the methyltransferase superfamily. PrmA family.

It localises to the cytoplasm. It carries out the reaction L-lysyl-[protein] + 3 S-adenosyl-L-methionine = N(6),N(6),N(6)-trimethyl-L-lysyl-[protein] + 3 S-adenosyl-L-homocysteine + 3 H(+). Its function is as follows. Methylates ribosomal protein L11. This Histophilus somni (strain 2336) (Haemophilus somnus) protein is Ribosomal protein L11 methyltransferase.